The primary structure comprises 128 residues: Dehydrin Xero 1 (128 aa).

The span at Met-1–Gln-19 shows a compositional bias: polar residues. A disordered region spans residues Met-1–His-128. Composition is skewed to low complexity over residues Pro-23 to Ala-41 and Gly-48 to Ser-60. Basic and acidic residues predominate over residues Gly-75 to Asn-91. The span at Lys-92 to Asp-104 shows a compositional bias: polar residues. A compositionally biased stretch (basic and acidic residues) spans Thr-107–His-128.

The protein belongs to the plant dehydrin family.

The polypeptide is Dehydrin Xero 1 (XERO1) (Arabidopsis thaliana (Mouse-ear cress)).